Consider the following 145-residue polypeptide: MIIVCASCGAKNRVPEEKLAVHPNCGQCHQALLPLEPIELNEQNFSNFISNSDLPVLIDLWAEWCGPCKMMAPHFAQVAKQNPYVVFAKIDTEANPRLSAAFNVRSIPTLVLMNKTTEVARISGALRTLELQQWLDQQLQQQQGN.

3 residues coordinate heme: Cys-25, Cys-28, and His-29. Residues 29–140 (HQALLPLEPI…LQQWLDQQLQ (112 aa)) enclose the Thioredoxin domain. Cys-65 and Cys-68 are oxidised to a cystine.

This sequence belongs to the thioredoxin family.

Functionally, participates in various redox reactions through the reversible oxidation of its active center dithiol to a disulfide and catalyzes dithiol-disulfide exchange reactions. This Corynebacterium nephridii protein is Thioredoxin C-3.